We begin with the raw amino-acid sequence, 253 residues long: Imidazole glycerol phosphate synthase subunit HisF (253 aa).

Catalysis depends on residues aspartate 11 and aspartate 130.

The protein belongs to the HisA/HisF family. In terms of assembly, heterodimer of HisH and HisF.

The protein resides in the cytoplasm. It catalyses the reaction 5-[(5-phospho-1-deoxy-D-ribulos-1-ylimino)methylamino]-1-(5-phospho-beta-D-ribosyl)imidazole-4-carboxamide + L-glutamine = D-erythro-1-(imidazol-4-yl)glycerol 3-phosphate + 5-amino-1-(5-phospho-beta-D-ribosyl)imidazole-4-carboxamide + L-glutamate + H(+). It participates in amino-acid biosynthesis; L-histidine biosynthesis; L-histidine from 5-phospho-alpha-D-ribose 1-diphosphate: step 5/9. Its function is as follows. IGPS catalyzes the conversion of PRFAR and glutamine to IGP, AICAR and glutamate. The HisF subunit catalyzes the cyclization activity that produces IGP and AICAR from PRFAR using the ammonia provided by the HisH subunit. The chain is Imidazole glycerol phosphate synthase subunit HisF from Dehalococcoides mccartyi (strain CBDB1).